Here is a 274-residue protein sequence, read N- to C-terminus: NAD kinase (274 aa).

Aspartate 59 acts as the Proton acceptor in catalysis. NAD(+)-binding positions include 59–60, 133–134, arginine 144, aspartate 163, 174–179, and glutamine 233; these read DG, ND, and TAYALS.

It belongs to the NAD kinase family. It depends on a divalent metal cation as a cofactor.

The protein resides in the cytoplasm. The enzyme catalyses NAD(+) + ATP = ADP + NADP(+) + H(+). Functionally, involved in the regulation of the intracellular balance of NAD and NADP, and is a key enzyme in the biosynthesis of NADP. Catalyzes specifically the phosphorylation on 2'-hydroxyl of the adenosine moiety of NAD to yield NADP. This is NAD kinase from Aquifex aeolicus (strain VF5).